We begin with the raw amino-acid sequence, 254 residues long: MNAMTAFSLNGAAPLANADELEAALRQIGAARYHNLHPFHRLLHGGKLNKGQVQAWALNRYYYQSSIPIKDAVVISRFRDRATRVEWRHRIEDHDGDLSSEGGIERWLKLTEGLGLDSGYVESTQGILPATRFAVDAYVHFVRDRTPLEAIASSLTELFAPNLHEERIAGMLAHYDFVNPEIMSYFKRRLEQAPRDADFALRHVKQHATTPAEREAVCNALIFKTNVLWAQLDALHHAYVDGHIPPGAFVPQGF.

It belongs to the PqqC family.

It catalyses the reaction 6-(2-amino-2-carboxyethyl)-7,8-dioxo-1,2,3,4,7,8-hexahydroquinoline-2,4-dicarboxylate + 3 O2 = pyrroloquinoline quinone + 2 H2O2 + 2 H2O + H(+). It participates in cofactor biosynthesis; pyrroloquinoline quinone biosynthesis. Ring cyclization and eight-electron oxidation of 3a-(2-amino-2-carboxyethyl)-4,5-dioxo-4,5,6,7,8,9-hexahydroquinoline-7,9-dicarboxylic-acid to PQQ. This Rhodopseudomonas palustris (strain ATCC BAA-98 / CGA009) protein is Pyrroloquinoline-quinone synthase.